A 202-amino-acid chain; its full sequence is Holliday junction branch migration complex subunit RuvA (202 aa).

The segment at 1 to 62 is domain I; sequence MIGYLRGRLH…EDAMELYGFT (62 aa). Residues 63–141 are domain II; that stretch reads RPEELHLFTL…KSGLVDGTET (79 aa). The flexible linker stretch occupies residues 141-145; that stretch reads TEAIP. Residues 146–202 form a domain III region; that stretch reads AGGGDNDEALAALLALGYSREEIGPILARVRQELGNAAPTTAVLQAVLKTFGRGGGD.

The protein belongs to the RuvA family. In terms of assembly, homotetramer. Forms an RuvA(8)-RuvB(12)-Holliday junction (HJ) complex. HJ DNA is sandwiched between 2 RuvA tetramers; dsDNA enters through RuvA and exits via RuvB. An RuvB hexamer assembles on each DNA strand where it exits the tetramer. Each RuvB hexamer is contacted by two RuvA subunits (via domain III) on 2 adjacent RuvB subunits; this complex drives branch migration. In the full resolvosome a probable DNA-RuvA(4)-RuvB(12)-RuvC(2) complex forms which resolves the HJ.

The protein localises to the cytoplasm. Functionally, the RuvA-RuvB-RuvC complex processes Holliday junction (HJ) DNA during genetic recombination and DNA repair, while the RuvA-RuvB complex plays an important role in the rescue of blocked DNA replication forks via replication fork reversal (RFR). RuvA specifically binds to HJ cruciform DNA, conferring on it an open structure. The RuvB hexamer acts as an ATP-dependent pump, pulling dsDNA into and through the RuvAB complex. HJ branch migration allows RuvC to scan DNA until it finds its consensus sequence, where it cleaves and resolves the cruciform DNA. This Moorella thermoacetica (strain ATCC 39073 / JCM 9320) protein is Holliday junction branch migration complex subunit RuvA.